We begin with the raw amino-acid sequence, 562 residues long: Probable Xaa-Pro aminopeptidase PEPP (562 aa).

4 residues coordinate Mn(2+): Asp358, Asp369, Glu492, and Glu532.

It belongs to the peptidase M24B family. Requires Mn(2+) as cofactor.

The catalysed reaction is Release of any N-terminal amino acid, including proline, that is linked to proline, even from a dipeptide or tripeptide.. Its function is as follows. Catalyzes the removal of a penultimate prolyl residue from the N-termini of peptides. This chain is Probable Xaa-Pro aminopeptidase PEPP (PEPP), found in Leptosphaeria maculans (strain JN3 / isolate v23.1.3 / race Av1-4-5-6-7-8) (Blackleg fungus).